A 142-amino-acid polypeptide reads, in one-letter code: Protein-export protein SecB (142 aa).

Belongs to the SecB family. Homotetramer, a dimer of dimers. One homotetramer interacts with 1 SecA dimer.

It localises to the cytoplasm. In terms of biological role, one of the proteins required for the normal export of preproteins out of the cell cytoplasm. It is a molecular chaperone that binds to a subset of precursor proteins, maintaining them in a translocation-competent state. It also specifically binds to its receptor SecA. In Buchnera aphidicola subsp. Acyrthosiphon pisum (strain 5A), this protein is Protein-export protein SecB.